A 208-amino-acid chain; its full sequence is Small ribosomal subunit protein uS4 (208 aa).

In terms of domain architecture, S4 RNA-binding spans 95–155; sequence TRLDALVLRA…AKSQTMVPFQ (61 aa).

The protein belongs to the universal ribosomal protein uS4 family. As to quaternary structure, part of the 30S ribosomal subunit. Contacts protein S5. The interaction surface between S4 and S5 is involved in control of translational fidelity.

In terms of biological role, one of the primary rRNA binding proteins, it binds directly to 16S rRNA where it nucleates assembly of the body of the 30S subunit. With S5 and S12 plays an important role in translational accuracy. The chain is Small ribosomal subunit protein uS4 from Bifidobacterium adolescentis (strain ATCC 15703 / DSM 20083 / NCTC 11814 / E194a).